A 150-amino-acid polypeptide reads, in one-letter code: Phosphoribosyl-AMP cyclohydrolase (150 aa).

Asp-93 is a binding site for Mg(2+). Zn(2+) is bound at residue Cys-94. Positions 95 and 97 each coordinate Mg(2+). Residues Cys-112 and Cys-119 each contribute to the Zn(2+) site.

It belongs to the PRA-CH family. In terms of assembly, homodimer. Mg(2+) is required as a cofactor. Requires Zn(2+) as cofactor.

It is found in the cytoplasm. It catalyses the reaction 1-(5-phospho-beta-D-ribosyl)-5'-AMP + H2O = 1-(5-phospho-beta-D-ribosyl)-5-[(5-phospho-beta-D-ribosylamino)methylideneamino]imidazole-4-carboxamide. The protein operates within amino-acid biosynthesis; L-histidine biosynthesis; L-histidine from 5-phospho-alpha-D-ribose 1-diphosphate: step 3/9. Functionally, catalyzes the hydrolysis of the adenine ring of phosphoribosyl-AMP. In Rhizobium leguminosarum bv. trifolii (strain WSM2304), this protein is Phosphoribosyl-AMP cyclohydrolase.